The following is a 444-amino-acid chain: Protein cereblon (444 aa).

Positions Met-1–Asp-52 are disordered. Residues Ala-23–Asp-37 are compositionally biased toward acidic residues. Residues Cys-80–Thr-321 enclose the Lon N-terminal domain. In terms of domain architecture, CULT spans Cys-320–Ile-428. The Zn(2+) site is built by Cys-325 and Cys-328. Residues His-380, Trp-382, and Trp-388 each contribute to the (S)-thalidomide site. Positions 393 and 396 each coordinate Zn(2+).

Belongs to the CRBN family. Component of a DCX (DDB1-CUL4-X-box) protein ligase complex, at least composed of CRBN, CUL4A, DDB1 and RBX1. Interacts directly with DDB1. Interacts with KCNT1. Interacts with ILF2. Interacts with TRAF6 and ECSIT. Ubiquitinated, ubiquitination is mediated by its own DCX protein ligase complex.

The protein localises to the cytoplasm. Its subcellular location is the nucleus. The protein resides in the membrane. It participates in protein modification; protein ubiquitination. In terms of biological role, substrate recognition component of a DCX (DDB1-CUL4-X-box) E3 protein ligase complex that mediates the ubiquitination and subsequent proteasomal degradation of target proteins, such as MEIS2, ILF2 or GLUL. Normal degradation of key regulatory proteins is required for normal limb outgrowth and expression of the fibroblast growth factor FGF8. Maintains presynaptic glutamate release and consequently cognitive functions, such as memory and learning, by negatively regulating large-conductance calcium-activated potassium (BK) channels in excitatory neurons. Likely to function by regulating the assembly and neuronal surface expression of BK channels via its interaction with KCNT1. May also be involved in regulating anxiety-like behaviors via a BK channel-independent mechanism. Plays a negative role in TLR4 signaling by interacting with TRAF6 and ECSIT, leading to inhibition of ECSIT ubiquitination, an important step of the signaling. In Bos taurus (Bovine), this protein is Protein cereblon (CRBN).